Here is a 287-residue protein sequence, read N- to C-terminus: Anthocyanidin 3-O-glucosyltransferase 7 (287 aa).

UDP-alpha-D-glucose is bound by residues alanine 162, glutamine 164, histidine 179, tryptophan 182, asparagine 183, serine 184, and glutamate 187. Residue glycine 202 participates in an anthocyanidin binding. UDP-alpha-D-glucose contacts are provided by aspartate 203 and glutamine 204.

The protein belongs to the UDP-glycosyltransferase family. Expressed in cotyledons, hypocotyls, roots and leaves.

It carries out the reaction an anthocyanidin + UDP-alpha-D-glucose + H(+) = an anthocyanidin 3-O-beta-D-glucoside + UDP. It participates in pigment biosynthesis; anthocyanin biosynthesis. Its function is as follows. In the presence of other necessary color factors, this glycosylation reaction allows the accumulation of anthocyanin pigments. The protein is Anthocyanidin 3-O-glucosyltransferase 7 (GT7) of Manihot esculenta (Cassava).